A 561-amino-acid chain; its full sequence is MTTTSKTSLQEEYVIDAVDHRGFSARRSITGRWRAAWFIIGVEVAERFANYGIGSNLISYLTGPLGQSTAVAAANVNAWSGISTILPLLGAFVADAFLGRYITIIIASFIYVLGLAFLTLSAFLIPNNTEVTSSPSSFLNALFFFSLYLVAIGQSGHKPCVQAFGADQFDEKNPQENSDRSSFFNWWYLSMCAGIGLAILVVVYIQENVSWALGFGIPCVFMVISLVLFVLGRKSYRFSKTRQEEETNPFTRIGRVFFVAFKNQRLNSSDLCKVELIEANRSQESPEELSFLNKALLVPNDSDEGEVACKSRDVEDATALVRLIPVWLTTLAYAIPFAQYMTFFTKQGVTMERTIFPGVEIPPASLQVLISISIVLFVPIYDRVLVPIGRSITKDPCGITTLKRIGTGMVLATLTMVVAALVESKRLETAKEYGLIDQPKTTLPMSIWWLFPQYMLLGLADVHTLVGMQEFFYSQVPTELRSLGLAIYLSAMGVGSLLSSLLIYLIDLATGGDAGNSWFNSNLNRAHLDYFYWLLAVVSAVGFFTFLFISKSYIYRRVDVV.

A helical membrane pass occupies residues 78-98; that stretch reads AWSGISTILPLLGAFVADAFL. A Phosphothreonine modification is found at threonine 103. 10 consecutive transmembrane segments (helical) span residues 104–124, 133–153, 183–203, 211–231, 324–344, 361–381, 405–425, 447–467, 486–506, and 530–550; these read IIIA…SAFL, SSPS…VAIG, FFNW…LVVV, WALG…LFVL, IPVW…MTFF, IPPA…VPIY, IGTG…VESK, IWWL…TLVG, AIYL…IYLI, and YFYW…LFIS.

The protein belongs to the major facilitator superfamily. Proton-dependent oligopeptide transporter (POT/PTR) (TC 2.A.17) family. As to expression, expressed in roots, flowers and siliques. Detected in stems and leaves.

The protein localises to the membrane. The polypeptide is Protein NRT1/ PTR FAMILY 5.13 (NPF5.13) (Arabidopsis thaliana (Mouse-ear cress)).